We begin with the raw amino-acid sequence, 340 residues long: Replication factor C subunit 3 (340 aa).

Position 2 is an N-acetylserine (serine 2). ATP is bound by residues 16–19, arginine 20, tyrosine 28, 53–61, asparagine 148, and arginine 206; these read VEKY and GPPGTGKTS.

This sequence belongs to the activator 1 small subunits family. Replication factor C (RFC) is a heteropentamer of subunits RFC1, RFC2, RFC3, RFC4 and RFC5 and forms a complex with POL30/PCNA in the presence of ATP. Component of the RAD24-RFC complex which consists of RAD14, RFC2, RFC3, RFC4 and RFC5 and associates with the checkpoint clamp DDC1:MEC3:RAD17 complex. Component of the ELG1-RFC complex which consists of ELG1, RFC2, RFC3, RFC4 and RFC5. Component of the CTF18-RFC complex, which consists of CTF18, CTF8, DCC1, RFC2, RFC3, RFC4 and RFC5. RFC3 interacts with ECO1 and POL30/PCNA.

It is found in the nucleus. Functionally, component of ATP-dependent clamp loader (RFC and RFC-like) complexes for DNA clamps, such as the POL30/PCNA homotrimer and the checkpoint clamp DDC1:MEC3:RAD17 complex. During a clamp loading circle, the RFC:clamp complex binds to DNA and the recognition of the double-stranded/single-stranded junction stimulates ATP hydrolysis by RFC. The complex presumably provides bipartite ATP sites in which one subunit supplies a catalytic site for hydrolysis of ATP bound to the neighboring subunit. Dissociation of RFC from the clamp leaves the clamp encircling DNA. Component of the replication factor C (RFC or activator 1) complex which loads POL30/PCNA and acts during elongation of primed DNA templates by DNA polymerase delta and epsilon. RFC has an essential but redundant activity in sister chromatid cohesion establishment. Component of the RFC-like complex CTF18-RFC which is required for efficient establishment of chromosome cohesion during S-phase and may load or unload POL30/PCNA. Component of the RFC-like RAD24-RFC complex which loads the checkpoint clamp DDC1:MEC3:RAD17 complex and is involved in DNA repair pathways. Component of the RFC-like ELG1-RFC complex which appears to have a role in DNA replication, replication fork re-start, recombination and repair. RFC3 supplies a catalytic site to the ATP site of RFC4. This is Replication factor C subunit 3 (RFC3) from Saccharomyces cerevisiae (strain ATCC 204508 / S288c) (Baker's yeast).